The chain runs to 168 residues: ATP synthase subunit b (168 aa).

The helical transmembrane segment at 9 to 29 threads the bilayer; the sequence is LFNLSTFVFTIINLLVLYYIL.

It belongs to the ATPase B chain family. F-type ATPases have 2 components, F(1) - the catalytic core - and F(0) - the membrane proton channel. F(1) has five subunits: alpha(3), beta(3), gamma(1), delta(1), epsilon(1). F(0) has three main subunits: a(1), b(2) and c(10-14). The alpha and beta chains form an alternating ring which encloses part of the gamma chain. F(1) is attached to F(0) by a central stalk formed by the gamma and epsilon chains, while a peripheral stalk is formed by the delta and b chains.

The protein resides in the cell membrane. Its function is as follows. F(1)F(0) ATP synthase produces ATP from ADP in the presence of a proton or sodium gradient. F-type ATPases consist of two structural domains, F(1) containing the extramembraneous catalytic core and F(0) containing the membrane proton channel, linked together by a central stalk and a peripheral stalk. During catalysis, ATP synthesis in the catalytic domain of F(1) is coupled via a rotary mechanism of the central stalk subunits to proton translocation. In terms of biological role, component of the F(0) channel, it forms part of the peripheral stalk, linking F(1) to F(0). This chain is ATP synthase subunit b, found in Caldanaerobacter subterraneus subsp. tengcongensis (strain DSM 15242 / JCM 11007 / NBRC 100824 / MB4) (Thermoanaerobacter tengcongensis).